A 497-amino-acid polypeptide reads, in one-letter code: Glutamyl-tRNA(Gln) amidotransferase subunit A (497 aa).

Active-site charge relay system residues include Lys80 and Ser155. Catalysis depends on Ser179, which acts as the Acyl-ester intermediate.

The protein belongs to the amidase family. GatA subfamily. As to quaternary structure, heterotrimer of A, B and C subunits.

It carries out the reaction L-glutamyl-tRNA(Gln) + L-glutamine + ATP + H2O = L-glutaminyl-tRNA(Gln) + L-glutamate + ADP + phosphate + H(+). Functionally, allows the formation of correctly charged Gln-tRNA(Gln) through the transamidation of misacylated Glu-tRNA(Gln) in organisms which lack glutaminyl-tRNA synthetase. The reaction takes place in the presence of glutamine and ATP through an activated gamma-phospho-Glu-tRNA(Gln). This Streptomyces coelicolor (strain ATCC BAA-471 / A3(2) / M145) protein is Glutamyl-tRNA(Gln) amidotransferase subunit A (gatA).